The following is a 208-amino-acid chain: Uracil phosphoribosyltransferase (208 aa).

5-phospho-alpha-D-ribose 1-diphosphate-binding positions include Arg78, Arg103, and 130-138 (DPMFATGGT). Uracil is bound by residues Ile193 and 198-200 (GDA). 5-phospho-alpha-D-ribose 1-diphosphate is bound at residue Asp199.

This sequence belongs to the UPRTase family. Mg(2+) is required as a cofactor.

It catalyses the reaction UMP + diphosphate = 5-phospho-alpha-D-ribose 1-diphosphate + uracil. It participates in pyrimidine metabolism; UMP biosynthesis via salvage pathway; UMP from uracil: step 1/1. Allosterically activated by GTP. Functionally, catalyzes the conversion of uracil and 5-phospho-alpha-D-ribose 1-diphosphate (PRPP) to UMP and diphosphate. This Campylobacter jejuni subsp. jejuni serotype O:2 (strain ATCC 700819 / NCTC 11168) protein is Uracil phosphoribosyltransferase.